Consider the following 839-residue polypeptide: Taste receptor type 1 member 2 (839 aa).

An N-terminal signal peptide occupies residues 1-19; that stretch reads MRPRATTICSLFFLLRVLA. The Extracellular portion of the chain corresponds to 20-566; it reads EPAKNSDFYL…AFLEWHEAPT (547 aa). Residues asparagine 84, asparagine 127, asparagine 248, asparagine 292, asparagine 312, asparagine 368, asparagine 428, asparagine 487, and asparagine 527 are each glycosylated (N-linked (GlcNAc...) asparagine). Residues 567-587 traverse the membrane as a helical segment; that stretch reads IVVALLAALGFLSTLAILVIF. Residues 588-602 lie on the Cytoplasmic side of the membrane; it reads WRHFQTPMVRSAGGP. Residues 603-623 traverse the membrane as a helical segment; sequence MCFLMLTLLLVAYMVVPVYVG. Residues 624-635 are Extracellular-facing; sequence PPKVSTCFCRQA. Residues 636-656 form a helical membrane-spanning segment; it reads LFPLCFTICISCIAVRSFQIV. Residues 657 to 681 are Cytoplasmic-facing; it reads CVFKMASRFPRAYSYWVRYQGPYVS. A helical membrane pass occupies residues 682-702; that stretch reads MAFITVLKMVTVVIGMLATGL. Over 703 to 727 the chain is Extracellular; sequence NPTTRIDPDDPKIMIVSCNPNYRNS. Residues 728-748 form a helical membrane-spanning segment; it reads LFFNTGLDLLLSVVGFSFAYM. The Cytoplasmic segment spans residues 749-760; sequence GKELPTNYNEAK. Residues 761 to 781 traverse the membrane as a helical segment; the sequence is FITLSMTFYFTSSVSLCTFMS. Over 782 to 784 the chain is Extracellular; sequence AYN. The chain crosses the membrane as a helical span at residues 785–805; it reads GVLVTIMDLLVTVLNLLAISL. Residues 806 to 839 are Cytoplasmic-facing; it reads GYFGPKCYMILFYPERNTPAYFNSMIQGYTMRRD.

Belongs to the G-protein coupled receptor 3 family. TAS1R subfamily. As to quaternary structure, forms heterodimers with TAS1R3.

Its subcellular location is the cell membrane. Functionally, putative taste receptor. TAS1R2/TAS1R3 recognizes diverse natural and synthetic sweeteners. This chain is Taste receptor type 1 member 2 (TAS1R2), found in Papio hamadryas (Hamadryas baboon).